Here is a 509-residue protein sequence, read N- to C-terminus: DEAD-box ATP-dependent RNA helicase CshA (509 aa).

Residues 2–30 (QNFKELGISDKTVQTLEAMGFKEPTPIQK) carry the Q motif motif. One can recognise a Helicase ATP-binding domain in the interval 33 to 203 (IPYALEGDDI…QQFMKAPKII (171 aa)). Residue 46-53 (AQTGTGKT) coordinates ATP. Residues 150–153 (DEAD) carry the DEAD box motif. One can recognise a Helicase C-terminal domain in the interval 214 to 375 (QIDEYYTIVK…LRPPHRKEVL (162 aa)). 2 stretches are compositionally biased toward basic residues: residues 440-459 (ARKNRSSKGGSRRSNHKRGN) and 467-482 (RRSKGSKGQSSKKKNQ). Residues 440 to 509 (ARKNRSSKGG…KGRTFADHQK (70 aa)) form a disordered region. Over residues 483–492 (KKFDRRDKQQ) the composition is skewed to basic and acidic residues.

This sequence belongs to the DEAD box helicase family. CshA subfamily. As to quaternary structure, oligomerizes, may be a member of the RNA degradosome.

It localises to the cytoplasm. It catalyses the reaction ATP + H2O = ADP + phosphate + H(+). DEAD-box RNA helicase possibly involved in RNA degradation. Unwinds dsRNA in both 5'- and 3'-directions, has RNA-dependent ATPase activity. The sequence is that of DEAD-box ATP-dependent RNA helicase CshA from Staphylococcus epidermidis (strain ATCC 12228 / FDA PCI 1200).